The primary structure comprises 290 residues: Probable protein phosphatase 2C 62 (290 aa).

A PPM-type phosphatase domain is found at 38–288; the sequence is KHGYHLVKGK…DDISCIVVKF (251 aa). Mn(2+) contacts are provided by D75, G76, D240, and D279.

It belongs to the PP2C family. The cofactor is Mg(2+). Mn(2+) is required as a cofactor.

It catalyses the reaction O-phospho-L-seryl-[protein] + H2O = L-seryl-[protein] + phosphate. It carries out the reaction O-phospho-L-threonyl-[protein] + H2O = L-threonyl-[protein] + phosphate. The protein is Probable protein phosphatase 2C 62 of Oryza sativa subsp. japonica (Rice).